Reading from the N-terminus, the 557-residue chain is Formate--tetrahydrofolate ligase (557 aa).

An ATP-binding site is contributed by 65–72 (TPAGEGKT).

It belongs to the formate--tetrahydrofolate ligase family.

It carries out the reaction (6S)-5,6,7,8-tetrahydrofolate + formate + ATP = (6R)-10-formyltetrahydrofolate + ADP + phosphate. It functions in the pathway one-carbon metabolism; tetrahydrofolate interconversion. In Acidiphilium cryptum (strain JF-5), this protein is Formate--tetrahydrofolate ligase.